The chain runs to 189 residues: GTPase KRas (189 aa).

Methionine 1 is subject to N-acetylmethionine; in GTPase KRas; alternate. Threonine 2 is subject to N-acetylthreonine; in GTPase KRas, N-terminally processed. GTP is bound by residues 10-18 (GAGGVGKSA), 29-35 (VDEYDPT), and 59-60 (AG). The short motif at 32–40 (YDPTIEDSY) is the Effector region element. The (Microbial infection) O-linked (Glc) threonine; by P.sordellii toxin TcsL glycan is linked to threonine 35. Lysine 104 carries the post-translational modification N6-acetyllysine. 116–119 (NKCD) contacts GTP. A hypervariable region region spans residues 166–185 (YRLKKISKEEKTPGCVKIKK). Lysine 170 is covalently cross-linked (Glycyl lysine isopeptide (Lys-Gly) (interchain with G-Cter in ubiquitin)). Residue cysteine 180 is the site of S-palmitoyl cysteine attachment. Residues lysine 182, lysine 184, and lysine 185 are each lipidated (N6-palmitoyl lysine). At cysteine 186 the chain carries Cysteine methyl ester. Cysteine 186 is lipidated: S-farnesyl cysteine. The propeptide at 187–189 (IIM) is removed in mature form.

Belongs to the small GTPase superfamily. Ras family. In terms of assembly, interacts with PHLPP. Interacts (active GTP-bound form preferentially) with RGS14. Interacts (when farnesylated) with PDE6D; this promotes dissociation from the cell membrane. Interacts with SOS1. Interacts (when farnesylated) with GPR31. Interacts with RAP1GDS1. Interacts (active GTP-bound form) with both SHOC2 and PP1c (all isoforms) to form a tertiary complex; SHOC2 and PP1c preferably bind M-Ras/MRAS, but they also bind K-Ras/KRAS, N-Ras/NRAS and H-Ras/HRAS. Interacts (GTP-bound form) with MAPKAP1/SIN1; inhibiting K-Ras/KRAS activity. Interacts with GPR31; in a farnelysation-dependent manner. In terms of processing, acetylation at Lys-104 prevents interaction with guanine nucleotide exchange factors (GEFs). Post-translationally, palmitoylated at Lys-182, Lys-184 and Lys-185. Palmitoylation on lysine residues is promoted by palmitoylation at Cys-180. Lysine-depalmitoylation by SIRT2 promotes its localization to endomembranes in endocytic pathways. Ubiquitinated by the BCR(LZTR1) E3 ubiquitin ligase complex at Lys-170 in a non-degradative manner, leading to inhibit Ras signaling by decreasing Ras association with membranes. In terms of processing, (Microbial infection) Glucosylated at Thr-35 by P.sordellii toxin TcsL.

The protein resides in the cell membrane. It localises to the endomembrane system. The protein localises to the cytoplasm. Its subcellular location is the cytosol. The enzyme catalyses GTP + H2O = GDP + phosphate + H(+). Its activity is regulated as follows. Alternates between an inactive form bound to GDP and an active form bound to GTP. Activated by a guanine nucleotide-exchange factor (GEF) and inactivated by a GTPase-activating protein (GAP). Interaction with SOS1 promotes exchange of bound GDP to GTP. Its function is as follows. Ras proteins bind GDP/GTP and possess intrinsic GTPase activity. Plays an important role in the regulation of cell proliferation. Plays a role in promoting oncogenic events by inducing transcriptional silencing of tumor suppressor genes (TSGs) in colorectal cancer (CRC) cells in a ZNF304-dependent manner. The sequence is that of GTPase KRas (KRAS) from Homo sapiens (Human).